The sequence spans 165 residues: UPF0114 protein in repA1-repA2 intergenic region (165 aa).

The next 3 membrane-spanning stretches (helical) occupy residues 15–35 (LMFP…VKFF), 53–73 (LVLI…LVMV), and 136–156 (IMWC…MAYI).

This sequence belongs to the UPF0114 family.

The protein localises to the cell membrane. The chain is UPF0114 protein in repA1-repA2 intergenic region from Buchnera aphidicola subsp. Thelaxes suberi.